The sequence spans 209 residues: V-type ATP synthase subunit D (209 aa).

This sequence belongs to the V-ATPase D subunit family.

Its function is as follows. Produces ATP from ADP in the presence of a proton gradient across the membrane. This chain is V-type ATP synthase subunit D (atpD), found in Chlamydia pneumoniae (Chlamydophila pneumoniae).